The sequence spans 350 residues: Lipase chaperone (350 aa).

A helical membrane pass occupies residues 12–32 (IVLYLILGCVVVCGVWYSFDV).

It belongs to the lipase chaperone family.

It is found in the cell inner membrane. Functionally, may be involved in the folding of the extracellular lipase during its passage through the periplasm. This Xylella fastidiosa (strain 9a5c) protein is Lipase chaperone (lifO).